Consider the following 306-residue polypeptide: MWFKNLLTYRLTQEVPFEPEALEAALASKPARPCASQELTTYGFVAPFGKGEDAPLVHVSGEYLLIAARKEERILPSSVVNDAVKEKVEEIETEQMRKVYKKERDQIKDEIIQAFLPRAFIRRSMIFAAIAPRLGVILVNSASAKRAEDLLSTLREVMGSLPVRPATVKIAPVATMTDWVKSQQAAEGFYVLDECELRDTAEDGGIVRCKRQDLTGEEIQLHLSTGKVVTQLALAWQDKLSFILDDKMVIKRLKFEELLQEQAEQDGGDEAAQQFDASFQLMMMTFAEFLPVLFEALGGEEIPQGV.

The protein belongs to the RdgC family.

The protein localises to the cytoplasm. It is found in the nucleoid. May be involved in recombination. This Pseudomonas putida (strain ATCC 47054 / DSM 6125 / CFBP 8728 / NCIMB 11950 / KT2440) protein is Recombination-associated protein RdgC.